We begin with the raw amino-acid sequence, 264 residues long: Purine nucleoside phosphorylase slr1573 (264 aa).

The Zn(2+) site is built by H61, C104, and H121.

This sequence belongs to the purine nucleoside phosphorylase YfiH/LACC1 family. Homodimer. It depends on Cu(2+) as a cofactor. Requires Zn(2+) as cofactor.

It catalyses the reaction adenosine + phosphate = alpha-D-ribose 1-phosphate + adenine. It carries out the reaction S-methyl-5'-thioadenosine + phosphate = 5-(methylsulfanyl)-alpha-D-ribose 1-phosphate + adenine. The catalysed reaction is inosine + phosphate = alpha-D-ribose 1-phosphate + hypoxanthine. The enzyme catalyses adenosine + H2O + H(+) = inosine + NH4(+). Its function is as follows. Purine nucleoside enzyme that catalyzes the phosphorolysis of adenosine and inosine nucleosides, yielding D-ribose 1-phosphate and the respective free bases, adenine and hypoxanthine. Also catalyzes the phosphorolysis of S-methyl-5'-thioadenosine into adenine and S-methyl-5-thio-alpha-D-ribose 1-phosphate. Also has adenosine deaminase activity. The sequence is that of Purine nucleoside phosphorylase slr1573 from Synechocystis sp. (strain ATCC 27184 / PCC 6803 / Kazusa).